The chain runs to 189 residues: Peptidyl-tRNA hydrolase (189 aa).

Residue H19 is the Proton acceptor of the active site. Positions 64, 66, and 112 each coordinate tRNA.

It belongs to the PTH family. In terms of assembly, monomer.

The protein localises to the cytoplasm. It catalyses the reaction an N-acyl-L-alpha-aminoacyl-tRNA + H2O = an N-acyl-L-amino acid + a tRNA + H(+). Its function is as follows. Hydrolyzes ribosome-free peptidyl-tRNAs (with 1 or more amino acids incorporated), which drop off the ribosome during protein synthesis, or as a result of ribosome stalling. In terms of biological role, catalyzes the release of premature peptidyl moieties from peptidyl-tRNA molecules trapped in stalled 50S ribosomal subunits, and thus maintains levels of free tRNAs and 50S ribosomes. The polypeptide is Peptidyl-tRNA hydrolase (Gluconobacter oxydans (strain 621H) (Gluconobacter suboxydans)).